Consider the following 116-residue polypeptide: Flagellar transcriptional regulator FlhD (116 aa).

Belongs to the FlhD family. In terms of assembly, homodimer; disulfide-linked. Forms a heterohexamer composed of two FlhC and four FlhD subunits. Each FlhC binds a FlhD dimer, forming a heterotrimer, and a hexamer assembles by dimerization of two heterotrimers.

It localises to the cytoplasm. In terms of biological role, functions in complex with FlhC as a master transcriptional regulator that regulates transcription of several flagellar and non-flagellar operons by binding to their promoter region. Activates expression of class 2 flagellar genes, including fliA, which is a flagellum-specific sigma factor that turns on the class 3 genes. Also regulates genes whose products function in a variety of physiological pathways. This is Flagellar transcriptional regulator FlhD from Pectobacterium carotovorum subsp. carotovorum (strain PC1).